The primary structure comprises 120 residues: Holo-[acyl-carrier-protein] synthase (120 aa).

Mg(2+)-binding residues include D8 and E60.

It belongs to the P-Pant transferase superfamily. AcpS family. Mg(2+) is required as a cofactor.

It localises to the cytoplasm. The catalysed reaction is apo-[ACP] + CoA = holo-[ACP] + adenosine 3',5'-bisphosphate + H(+). Transfers the 4'-phosphopantetheine moiety from coenzyme A to a Ser of acyl-carrier-protein. The protein is Holo-[acyl-carrier-protein] synthase of Anaplasma marginale (strain St. Maries).